Consider the following 862-residue polypeptide: Valine--tRNA ligase (862 aa).

The 'HIGH' region motif lies at 43–53; that stretch reads PNVTGSLHMGH. Positions 176, 179, 344, 347, 417, 420, 438, and 441 each coordinate Zn(2+). The 'KMSKS' region signature appears at 528 to 532; sequence KMSKS. Residue Lys531 coordinates ATP. Residues 802 to 862 are a coiled coil; the sequence is RRRQEKRLKE…RIREALSQIG (61 aa).

The protein belongs to the class-I aminoacyl-tRNA synthetase family. ValS type 1 subfamily. In terms of assembly, monomer. Requires Zn(2+) as cofactor.

The protein localises to the cytoplasm. The catalysed reaction is tRNA(Val) + L-valine + ATP = L-valyl-tRNA(Val) + AMP + diphosphate. Functionally, catalyzes the attachment of valine to tRNA(Val). As ValRS can inadvertently accommodate and process structurally similar amino acids such as threonine, to avoid such errors, it has a 'posttransfer' editing activity that hydrolyzes mischarged Thr-tRNA(Val) in a tRNA-dependent manner. The polypeptide is Valine--tRNA ligase (Thermus thermophilus (strain ATCC BAA-163 / DSM 7039 / HB27)).